Consider the following 168-residue polypeptide: Shikimate kinase (168 aa).

10–15 is a binding site for ATP; that stretch reads CSGKST. Ser14 serves as a coordination point for Mg(2+). Residues Asp32, Arg56, and Gly78 each contribute to the substrate site. Arg116 contributes to the ATP binding site. Arg133 contacts substrate.

The protein belongs to the shikimate kinase family. Monomer. Requires Mg(2+) as cofactor.

Its subcellular location is the cytoplasm. It catalyses the reaction shikimate + ATP = 3-phosphoshikimate + ADP + H(+). It functions in the pathway metabolic intermediate biosynthesis; chorismate biosynthesis; chorismate from D-erythrose 4-phosphate and phosphoenolpyruvate: step 5/7. Functionally, catalyzes the specific phosphorylation of the 3-hydroxyl group of shikimic acid using ATP as a cosubstrate. The polypeptide is Shikimate kinase (Aquifex aeolicus (strain VF5)).